Here is a 151-residue protein sequence, read N- to C-terminus: Ubiquitin-conjugating enzyme E2 2 (151 aa).

Positions 4–150 constitute a UBC core domain; it reads AARRRLMRDF…VRETVERSWE (147 aa). C88 serves as the catalytic Glycyl thioester intermediate.

It belongs to the ubiquitin-conjugating enzyme family.

The protein localises to the cytoplasm. It is found in the nucleus. It catalyses the reaction S-ubiquitinyl-[E1 ubiquitin-activating enzyme]-L-cysteine + [E2 ubiquitin-conjugating enzyme]-L-cysteine = [E1 ubiquitin-activating enzyme]-L-cysteine + S-ubiquitinyl-[E2 ubiquitin-conjugating enzyme]-L-cysteine.. Its pathway is protein modification; protein ubiquitination. Catalyzes the covalent attachment of ubiquitin to other proteins. Plays a role in transcription regulation by catalyzing the monoubiquitination of histone H2B to form H2BK123ub1. H2BK123ub1 gives a specific tag for epigenetic transcriptional activation and is also a prerequisite for H3K4me and H3K79me formation. Also involved in postreplication repair of UV-damaged DNA, in N-end rule-dependent protein degradation and in sporulation. This is Ubiquitin-conjugating enzyme E2 2 (UBC2) from Trichoderma harzianum (Hypocrea lixii).